We begin with the raw amino-acid sequence, 331 residues long: MRVATYASHSALQILKGAKDEGFETVAFGPSRVKPLYTKYFPVADHFIEGAYPEEELLEFEAVVVPTGSFVAHLGVELVEKMKVPYYGNKAVLRWESDRSLERKWLEKAKLRLPRIYEDPDDIDGPVIVKPFGAGGGRGYFLASSPEDFWKKAERLGVRSKEDLSRVQIQEYVVGVPVYPHYFYSKLNGELELMSVDRRYESNADAIGRIPAREQIDLGISTDYTVVGNIPIVLRESLLMDVIEAGERVVKAAEELMGGLWGPFCLEGVFTPDMEFVVFEISARIVAGTNPFVHGSPYTWLRYDFPVSTGRRIAMELKQGLEEDRLGELLT.

The 5-amino-1-(5-phospho-beta-D-ribosyl)imidazole-4-carboxamide site is built by His9 and Ser69. The ATP-grasp domain occupies Val76–Glu322. Residues Pro120 to Tyr179 and Glu201 contribute to the ATP site. Asn229 provides a ligand contact to 5-amino-1-(5-phospho-beta-D-ribosyl)imidazole-4-carboxamide. Glu267 and Glu280 together coordinate Mg(2+).

It belongs to the phosphohexose mutase family. Mg(2+) serves as cofactor. The cofactor is Mn(2+).

The catalysed reaction is 5-amino-1-(5-phospho-beta-D-ribosyl)imidazole-4-carboxamide + formate + ATP = 5-formamido-1-(5-phospho-D-ribosyl)imidazole-4-carboxamide + ADP + phosphate. It functions in the pathway purine metabolism; IMP biosynthesis via de novo pathway; 5-formamido-1-(5-phospho-D-ribosyl)imidazole-4-carboxamide from 5-amino-1-(5-phospho-D-ribosyl)imidazole-4-carboxamide (formate route): step 1/1. Functionally, catalyzes the ATP- and formate-dependent formylation of 5-aminoimidazole-4-carboxamide-1-beta-d-ribofuranosyl 5'-monophosphate (AICAR) to 5-formaminoimidazole-4-carboxamide-1-beta-d-ribofuranosyl 5'-monophosphate (FAICAR) in the absence of folates. The protein is 5-formaminoimidazole-4-carboxamide-1-(beta)-D-ribofuranosyl 5'-monophosphate synthetase of Thermococcus kodakarensis (strain ATCC BAA-918 / JCM 12380 / KOD1) (Pyrococcus kodakaraensis (strain KOD1)).